Consider the following 145-residue polypeptide: Transmembrane protein CCDC163 (145 aa).

The chain crosses the membrane as a helical span at residues 38-54; that stretch reads LIGLCICFFCSSGCIFL.

It localises to the membrane. The chain is Transmembrane protein CCDC163 from Homo sapiens (Human).